The sequence spans 324 residues: Transcription factor MYB74 (324 aa).

HTH myb-type domains follow at residues 10–62 and 63–117; these read KNGL…TNYL and RPDI…RKRL. 2 consecutive DNA-binding regions (H-T-H motif) follow at residues 38 to 62 and 90 to 113; these read WRTL…TNYL and WSAI…NTHI.

As to expression, highly expressed in flowers and at lower levels in rosette leaves and cauline leaves. Expressed at low levels in roots, stems and siliques.

The protein localises to the nucleus. Functionally, probable transcription factor that may function in salt stress response. The protein is Transcription factor MYB74 of Arabidopsis thaliana (Mouse-ear cress).